The chain runs to 289 residues: Phosphatidylglycerol--prolipoprotein diacylglyceryl transferase (289 aa).

Transmembrane regions (helical) follow at residues 13–33 (LGPLAIRWYALAYVAGILLGW), 61–81 (FILWVTLAIIVGGRLGHVLFY), and 99–119 (GGMSFHGGAIGVFLAIILFAM). Arg144 contacts a 1,2-diacyl-sn-glycero-3-phospho-(1'-sn-glycerol). 2 helical membrane-spanning segments follow: residues 218 to 238 (GVVMGLFTTFYAVFRISLENV) and 250 to 270 (LGLTMGIYLSIPMLLFGLWLI).

It belongs to the Lgt family.

It is found in the cell inner membrane. The enzyme catalyses L-cysteinyl-[prolipoprotein] + a 1,2-diacyl-sn-glycero-3-phospho-(1'-sn-glycerol) = an S-1,2-diacyl-sn-glyceryl-L-cysteinyl-[prolipoprotein] + sn-glycerol 1-phosphate + H(+). It participates in protein modification; lipoprotein biosynthesis (diacylglyceryl transfer). Its function is as follows. Catalyzes the transfer of the diacylglyceryl group from phosphatidylglycerol to the sulfhydryl group of the N-terminal cysteine of a prolipoprotein, the first step in the formation of mature lipoproteins. The chain is Phosphatidylglycerol--prolipoprotein diacylglyceryl transferase from Phenylobacterium zucineum (strain HLK1).